The following is a 310-amino-acid chain: Acetylglutamate kinase (310 aa).

Substrate-binding positions include 79–80, Arg101, and Asn206; that span reads GG.

The protein belongs to the acetylglutamate kinase family. ArgB subfamily.

The protein localises to the cytoplasm. The enzyme catalyses N-acetyl-L-glutamate + ATP = N-acetyl-L-glutamyl 5-phosphate + ADP. Its pathway is amino-acid biosynthesis; L-arginine biosynthesis; N(2)-acetyl-L-ornithine from L-glutamate: step 2/4. In terms of biological role, catalyzes the ATP-dependent phosphorylation of N-acetyl-L-glutamate. In Rhodospirillum rubrum (strain ATCC 11170 / ATH 1.1.1 / DSM 467 / LMG 4362 / NCIMB 8255 / S1), this protein is Acetylglutamate kinase.